A 350-amino-acid polypeptide reads, in one-letter code: Biotin synthase (350 aa).

The Radical SAM core domain occupies 54 to 278 (REIQLSTLLS…TMPQSYVRLS (225 aa)). Residues Cys-69, Cys-73, and Cys-76 each coordinate [4Fe-4S] cluster. Residues Cys-113, Cys-144, Cys-204, and Arg-276 each contribute to the [2Fe-2S] cluster site.

Belongs to the radical SAM superfamily. Biotin synthase family. Homodimer. Requires [4Fe-4S] cluster as cofactor. It depends on [2Fe-2S] cluster as a cofactor.

The enzyme catalyses (4R,5S)-dethiobiotin + (sulfur carrier)-SH + 2 reduced [2Fe-2S]-[ferredoxin] + 2 S-adenosyl-L-methionine = (sulfur carrier)-H + biotin + 2 5'-deoxyadenosine + 2 L-methionine + 2 oxidized [2Fe-2S]-[ferredoxin]. It participates in cofactor biosynthesis; biotin biosynthesis; biotin from 7,8-diaminononanoate: step 2/2. Catalyzes the conversion of dethiobiotin (DTB) to biotin by the insertion of a sulfur atom into dethiobiotin via a radical-based mechanism. This is Biotin synthase from Neisseria meningitidis serogroup A / serotype 4A (strain DSM 15465 / Z2491).